A 608-amino-acid chain; its full sequence is N(6)-adenosine-methyltransferase MT-A70-like protein (608 aa).

Basic and acidic residues predominate over residues 250–265 (KKKQERRDEKELRPDV). A disordered region spans residues 250 to 272 (KKKQERRDEKELRPDVDAGENVT). Residues 395–396 (DL) and aspartate 413 each bind S-adenosyl-L-methionine. Positions 414-428 (PPWDIHMELPYGTMS) are gate loop 1. Residues 480–497 (QLQRIIRTGRTGHWLNHG) are interphase loop. A positively charged region required for RNA-binding region spans residues 483–496 (RIIRTGRTGHWLNH). The interval 525 to 533 (VRATSHKPD) is gate loop 2. S-adenosyl-L-methionine-binding positions include lysine 531, 554 to 557 (RPHN), and 567 to 568 (NQ).

The protein belongs to the MT-A70-like family. As to quaternary structure, component of the WMM complex, a N6-methyltransferase complex composed of a catalytic subcomplex, named MAC, and of an associated subcomplex, named MACOM. The MAC subcomplex is composed of Ime4/Mettl3 and Mettl14. The MACOM subcomplex is composed of fl(2)d, Flacc/Xio, Hakai, vir, and, in some cases of nito. In terms of tissue distribution, expressed in testes. In the ovaries, detected in germaria, prefollicle, follicle and polar cells (at protein levels). Detected in the ooplasm and in the cells of the 16-cell cyst of early stages (at protein levels).

Its subcellular location is the nucleus. The enzyme catalyses an adenosine in mRNA + S-adenosyl-L-methionine = an N(6)-methyladenosine in mRNA + S-adenosyl-L-homocysteine + H(+). Its function is as follows. Catalytic component of the WMM complex, a complex that mediates N6-methyladenosine (m6A) methylation of mRNAs, a modification that plays a role in the efficiency of mRNA splicing and is required for sex determination. In the heterodimer formed with Mettl14, constitutes the catalytic core. Required for sex determination and dosage compensation via Sxl alternative splicing: m6A methylation acts as a key regulator of Sxl pre-mRNA and promotes female-specific alternative splicing of Sxl, which determines female physiognomy. M6A methylation is also required for neuronal functions. During oogenesis, required for egg chamber development probably as part of the N/Notch signaling. This chain is N(6)-adenosine-methyltransferase MT-A70-like protein, found in Drosophila melanogaster (Fruit fly).